Here is a 206-residue protein sequence, read N- to C-terminus: Histidine biosynthesis bifunctional protein HisIE (206 aa).

Positions 1–117 (MCNEPATSDV…SCFPAAPGQF (117 aa)) are phosphoribosyl-AMP cyclohydrolase. Residues 118 to 206 (LGALDALVAE…AVTVLEARHR (89 aa)) form a phosphoribosyl-ATP pyrophosphohydrolase region.

The protein in the N-terminal section; belongs to the PRA-CH family. It in the C-terminal section; belongs to the PRA-PH family.

Its subcellular location is the cytoplasm. The enzyme catalyses 1-(5-phospho-beta-D-ribosyl)-ATP + H2O = 1-(5-phospho-beta-D-ribosyl)-5'-AMP + diphosphate + H(+). The catalysed reaction is 1-(5-phospho-beta-D-ribosyl)-5'-AMP + H2O = 1-(5-phospho-beta-D-ribosyl)-5-[(5-phospho-beta-D-ribosylamino)methylideneamino]imidazole-4-carboxamide. It functions in the pathway amino-acid biosynthesis; L-histidine biosynthesis; L-histidine from 5-phospho-alpha-D-ribose 1-diphosphate: step 2/9. It participates in amino-acid biosynthesis; L-histidine biosynthesis; L-histidine from 5-phospho-alpha-D-ribose 1-diphosphate: step 3/9. The sequence is that of Histidine biosynthesis bifunctional protein HisIE (hisI) from Xylella fastidiosa (strain 9a5c).